The chain runs to 294 residues: Urease accessory protein UreD 1 (294 aa).

The segment at 1-20 is disordered; the sequence is MALSLDDLPEKPAPAEPVSA.

It belongs to the UreD family. UreD, UreF and UreG form a complex that acts as a GTP-hydrolysis-dependent molecular chaperone, activating the urease apoprotein by helping to assemble the nickel containing metallocenter of UreC. The UreE protein probably delivers the nickel.

Its subcellular location is the cytoplasm. Its function is as follows. Required for maturation of urease via the functional incorporation of the urease nickel metallocenter. This Methylorubrum populi (strain ATCC BAA-705 / NCIMB 13946 / BJ001) (Methylobacterium populi) protein is Urease accessory protein UreD 1.